The chain runs to 425 residues: D-tagatose 6-phosphate 4-epimerase (425 aa).

It belongs to the GatZ/KbaZ family.

The enzyme catalyses keto-D-tagatose 6-phosphate = keto-D-fructose 6-phosphate. Its pathway is carbohydrate metabolism. Functionally, involved in galactitol and D-altritol catabolism. Catalyzes the epimerization of D-tagatose 6-phosphate to D-fructose 6-phosphate. The protein is D-tagatose 6-phosphate 4-epimerase of Agrobacterium fabrum (strain C58 / ATCC 33970) (Agrobacterium tumefaciens (strain C58)).